The primary structure comprises 223 residues: Deoxyribose-phosphate aldolase (223 aa).

Aspartate 89 acts as the Proton donor/acceptor in catalysis. The active-site Schiff-base intermediate with acetaldehyde is lysine 152. Lysine 181 serves as the catalytic Proton donor/acceptor.

This sequence belongs to the DeoC/FbaB aldolase family. DeoC type 1 subfamily.

The protein localises to the cytoplasm. The enzyme catalyses 2-deoxy-D-ribose 5-phosphate = D-glyceraldehyde 3-phosphate + acetaldehyde. The protein operates within carbohydrate degradation; 2-deoxy-D-ribose 1-phosphate degradation; D-glyceraldehyde 3-phosphate and acetaldehyde from 2-deoxy-alpha-D-ribose 1-phosphate: step 2/2. Its function is as follows. Catalyzes a reversible aldol reaction between acetaldehyde and D-glyceraldehyde 3-phosphate to generate 2-deoxy-D-ribose 5-phosphate. The polypeptide is Deoxyribose-phosphate aldolase (Listeria innocua serovar 6a (strain ATCC BAA-680 / CLIP 11262)).